Consider the following 522-residue polypeptide: 2-isopropylmalate synthase (522 aa).

Positions 5–267 constitute a Pyruvate carboxyltransferase domain; it reads VIIFDTTLRD…ETGINAKEIH (263 aa). 4 residues coordinate Mn(2+): Asp14, His202, His204, and Asn238. The segment at 392–522 is regulatory domain; it reads QLQQLVVQSD…MQKNRELGGV (131 aa).

The protein belongs to the alpha-IPM synthase/homocitrate synthase family. LeuA type 1 subfamily. As to quaternary structure, homodimer. Mn(2+) serves as cofactor.

The protein localises to the cytoplasm. The enzyme catalyses 3-methyl-2-oxobutanoate + acetyl-CoA + H2O = (2S)-2-isopropylmalate + CoA + H(+). It functions in the pathway amino-acid biosynthesis; L-leucine biosynthesis; L-leucine from 3-methyl-2-oxobutanoate: step 1/4. Its function is as follows. Catalyzes the condensation of the acetyl group of acetyl-CoA with 3-methyl-2-oxobutanoate (2-ketoisovalerate) to form 3-carboxy-3-hydroxy-4-methylpentanoate (2-isopropylmalate). This is 2-isopropylmalate synthase from Shewanella baltica (strain OS185).